The sequence spans 466 residues: Membrane-bound lytic murein transglycosylase F (466 aa).

A signal peptide spans 1–24 (MKRFKLNYFIIGLIAILLTWSLWT). The non-LT domain stretch occupies residues 25-268 (TVPWRNAHQD…RLEEKYLGHV (244 aa)). Residues 269-466 (GGFDYVDTKT…KEKKAAQLAD (198 aa)) form an LT domain region. E313 is a catalytic residue.

This sequence in the N-terminal section; belongs to the bacterial solute-binding protein 3 family. In the C-terminal section; belongs to the transglycosylase Slt family.

The protein localises to the cell outer membrane. It carries out the reaction Exolytic cleavage of the (1-&gt;4)-beta-glycosidic linkage between N-acetylmuramic acid (MurNAc) and N-acetylglucosamine (GlcNAc) residues in peptidoglycan, from either the reducing or the non-reducing ends of the peptidoglycan chains, with concomitant formation of a 1,6-anhydrobond in the MurNAc residue.. Functionally, murein-degrading enzyme that degrades murein glycan strands and insoluble, high-molecular weight murein sacculi, with the concomitant formation of a 1,6-anhydromuramoyl product. Lytic transglycosylases (LTs) play an integral role in the metabolism of the peptidoglycan (PG) sacculus. Their lytic action creates space within the PG sacculus to allow for its expansion as well as for the insertion of various structures such as secretion systems and flagella. The protein is Membrane-bound lytic murein transglycosylase F of Sodalis glossinidius (strain morsitans).